The sequence spans 95 residues: Small ribosomal subunit protein bS6 (95 aa).

It belongs to the bacterial ribosomal protein bS6 family.

Its function is as follows. Binds together with bS18 to 16S ribosomal RNA. In Rhodococcus jostii (strain RHA1), this protein is Small ribosomal subunit protein bS6.